The following is a 466-amino-acid chain: VGFKAGVKEYKLTYYTPEYETKDTDILAAFRVTPQPGVPPEEAGAAVAAESSTGTWTTVWTDGLTSLDRYKGRCYHIEPVPGETDQYICYVAYPLDLFEEGSVTNMFTSIVGNVFGFKALRALRLEDLRIPTAYIKTFQGPPHGIQVERDKLNKYGRPLLGCTIKPKLGLSAKNYGRAVYECLRGGLDFTKDDENVNSQPFMRWRDRFLFCAEALYKAQAETGEIKGHYLNATAGTCEEMMKRAVFARELGVPIIMHDYLTGGFTANTSLAHYCRDNGLLLHIHRAMHAVIDRQKNHGIHFRVLAKALRMSGGDHIHSGTVVGKLEGERDITLGFVDLLRDDFIEKDRSRGIYFTQDWVSLPGVIPVASGGIHVWHMPALTEIFGDDSVLQFGGGTLGHPWGNAPGAVANRVALEACVQARNEGRDLAAEGNAIIREASKWSPELAAACEVWKEIKFEFKAVDTLD.

At lysine 4 the chain carries N6,N6,N6-trimethyllysine. Substrate contacts are provided by asparagine 113 and threonine 163. Catalysis depends on lysine 165, which acts as the Proton acceptor. Lysine 167 is a binding site for substrate. Residues lysine 191, aspartate 193, and glutamate 194 each coordinate Mg(2+). Residue lysine 191 is modified to N6-carboxylysine. Residue histidine 284 is the Proton acceptor of the active site. Residues arginine 285, histidine 317, and serine 369 each coordinate substrate.

This sequence belongs to the RuBisCO large chain family. Type I subfamily. Heterohexadecamer of 8 large chains and 8 small chains; disulfide-linked. The disulfide link is formed within the large subunit homodimers. It depends on Mg(2+) as a cofactor. The disulfide bond which can form in the large chain dimeric partners within the hexadecamer appears to be associated with oxidative stress and protein turnover.

Its subcellular location is the plastid. It localises to the chloroplast. It catalyses the reaction 2 (2R)-3-phosphoglycerate + 2 H(+) = D-ribulose 1,5-bisphosphate + CO2 + H2O. The catalysed reaction is D-ribulose 1,5-bisphosphate + O2 = 2-phosphoglycolate + (2R)-3-phosphoglycerate + 2 H(+). Functionally, ruBisCO catalyzes two reactions: the carboxylation of D-ribulose 1,5-bisphosphate, the primary event in carbon dioxide fixation, as well as the oxidative fragmentation of the pentose substrate in the photorespiration process. Both reactions occur simultaneously and in competition at the same active site. The sequence is that of Ribulose bisphosphate carboxylase large chain from Proboscidea louisianica (Louisiana Devil's-claw).